We begin with the raw amino-acid sequence, 466 residues long: Arginine biosynthesis bifunctional protein ArgJ, mitochondrial (466 aa).

Residues Thr-194, Lys-223, Thr-234, Glu-321, Asn-461, and Thr-466 each contribute to the substrate site. The Nucleophile role is filled by Thr-234.

It belongs to the ArgJ family. In terms of assembly, heterodimer of an alpha and a beta chain. The alpha and beta chains are autoproteolytically processed from a single precursor protein within the mitochondrion.

The protein resides in the mitochondrion matrix. It catalyses the reaction N(2)-acetyl-L-ornithine + L-glutamate = N-acetyl-L-glutamate + L-ornithine. It carries out the reaction L-glutamate + acetyl-CoA = N-acetyl-L-glutamate + CoA + H(+). It participates in amino-acid biosynthesis; L-arginine biosynthesis; L-ornithine and N-acetyl-L-glutamate from L-glutamate and N(2)-acetyl-L-ornithine (cyclic): step 1/1. The protein operates within amino-acid biosynthesis; L-arginine biosynthesis; N(2)-acetyl-L-ornithine from L-glutamate: step 1/4. In terms of biological role, catalyzes two activities which are involved in the cyclic version of arginine biosynthesis: the synthesis of acetylglutamate from glutamate and acetyl-CoA, and of ornithine by transacetylation between acetylornithine and glutamate. The polypeptide is Arginine biosynthesis bifunctional protein ArgJ, mitochondrial (Aspergillus flavus (strain ATCC 200026 / FGSC A1120 / IAM 13836 / NRRL 3357 / JCM 12722 / SRRC 167)).